A 28-amino-acid chain; its full sequence is Nicotinic acetylcholine receptor-binding protein Mnn-3C (28 aa).

Cysteines 3 and 24 form a disulfide.

This sequence belongs to the three-finger toxin family. Short-chain subfamily. In terms of tissue distribution, expressed by the venom gland.

It is found in the secreted. Functionally, binds and may inhibit nicotinic acetylcholine receptors (nAChR). The polypeptide is Nicotinic acetylcholine receptor-binding protein Mnn-3C (Micrurus nigrocinctus (Central American coral snake)).